Here is a 597-residue protein sequence, read N- to C-terminus: TOX high mobility group box family member 4 (597 aa).

2 disordered regions span residues 160 to 224 (GAIL…EPQK) and 520 to 546 (VQEESPPPQMDVELVSSSPPPSLSPQP). A compositionally biased stretch (basic residues) spans 207–217 (KPKTPKKKKKK). A Nuclear localization signal motif is present at residues 212–217 (KKKKKK). Residues 222-290 (PQKPLSAYAL…EYLKALALYK (69 aa)) constitute a DNA-binding region (HMG box).

Component of the PNUTS-PP1 phosphatase complex.

The protein resides in the nucleus. Its subcellular location is the chromosome. Transcription factor that modulates cell fate reprogramming from the somatic state to the pluripotent and neuronal fate. Also acts as a regulatory component of protein phosphatase 1 (PP1) complexes. Component of the PNUTS-PP1 protein phosphatase complex, a PP1 complex that regulates RNA polymerase II transcription pause-release. PNUTS-PP1 also plays a role in the control of chromatin structure and cell cycle progression during the transition from mitosis into interphase. This chain is TOX high mobility group box family member 4 (tox4), found in Xenopus tropicalis (Western clawed frog).